Reading from the N-terminus, the 586-residue chain is Exocyst complex component EXO70A3 (586 aa).

N-linked (GlcNAc...) asparagine glycans are attached at residues asparagine 65 and asparagine 106. The disordered stretch occupies residues 119-149; that stretch reads CLPSNLRPPSDDEGSDGKSHDPQSNGLGKTD. A helical membrane pass occupies residues 258–278; that stretch reads FAEITTISFGMLLSFGYAIAI. Residues asparagine 321 and asparagine 487 are each glycosylated (N-linked (GlcNAc...) asparagine).

Belongs to the EXO70 family. Subunit of the exocyst complex. In terms of tissue distribution, confined to the outer layer of the columella cells in the root tips of young seedlings.

It localises to the membrane. Its function is as follows. Component of the exocyst complex involved in the docking of exocytic vesicles with fusion sites on the plasma membrane during regulated or polarized secretion. Involved in PIN4 exocytosis and gravitropic responses in columella cells. By monitoring PIN4 distribution in columella cells, modulates auxin repartition and subsequently regulates the root system architecture (RSA), thus being a component of the auxin-dependent root directional growth (ARD). In Arabidopsis thaliana (Mouse-ear cress), this protein is Exocyst complex component EXO70A3.